The following is a 252-amino-acid chain: Trans-aconitate 2-methyltransferase (252 aa).

Belongs to the methyltransferase superfamily. Tam family.

The protein resides in the cytoplasm. The enzyme catalyses trans-aconitate + S-adenosyl-L-methionine = (E)-3-(methoxycarbonyl)pent-2-enedioate + S-adenosyl-L-homocysteine. Catalyzes the S-adenosylmethionine monomethyl esterification of trans-aconitate. This Escherichia coli (strain 55989 / EAEC) protein is Trans-aconitate 2-methyltransferase.